Reading from the N-terminus, the 412-residue chain is Glucose-1-phosphate adenylyltransferase (412 aa).

Residues Y98, G163, 178-179 (EK), and S189 contribute to the alpha-D-glucose 1-phosphate site.

It belongs to the bacterial/plant glucose-1-phosphate adenylyltransferase family. As to quaternary structure, homotetramer.

The catalysed reaction is alpha-D-glucose 1-phosphate + ATP + H(+) = ADP-alpha-D-glucose + diphosphate. It functions in the pathway glycan biosynthesis; glycogen biosynthesis. In terms of biological role, involved in the biosynthesis of ADP-glucose, a building block required for the elongation reactions to produce glycogen. Catalyzes the reaction between ATP and alpha-D-glucose 1-phosphate (G1P) to produce pyrophosphate and ADP-Glc. The protein is Glucose-1-phosphate adenylyltransferase of Thermosipho africanus (strain TCF52B).